Here is a 108-residue protein sequence, read N- to C-terminus: MSIPAGKNEMPAIHPGEILREEYLKPMGLSAHALAKALHVSPSRINEIVREQRGITADTALRLVRYFGGDAQSWLNMQTAYDLKMAEQDKQSINIIIPLSTDARNVEL.

Residues 19-74 form the HTH cro/C1-type domain; the sequence is LREEYLKPMGLSAHALAKALHVSPSRINEIVREQRGITADTALRLVRYFGGDAQSW. Residues 30–49 constitute a DNA-binding region (H-T-H motif); it reads SAHALAKALHVSPSRINEIV.

The protein belongs to the VapA/VapI family.

The polypeptide is Virulence-associated protein I (vapI) (Dichelobacter nodosus (Bacteroides nodosus)).